The following is a 431-amino-acid chain: D-tagatose-1,6-bisphosphate aldolase subunit KbaZ (431 aa).

This sequence belongs to the GatZ/KbaZ family. KbaZ subfamily. Forms a complex with KbaY.

It functions in the pathway carbohydrate metabolism; D-tagatose 6-phosphate degradation; D-glyceraldehyde 3-phosphate and glycerone phosphate from D-tagatose 6-phosphate: step 2/2. Component of the tagatose-1,6-bisphosphate aldolase KbaYZ that is required for full activity and stability of the Y subunit. Could have a chaperone-like function for the proper and stable folding of KbaY. When expressed alone, KbaZ does not show any aldolase activity. In Salmonella arizonae (strain ATCC BAA-731 / CDC346-86 / RSK2980), this protein is D-tagatose-1,6-bisphosphate aldolase subunit KbaZ.